An 88-amino-acid chain; its full sequence is UPF0297 protein BLi02868/BL02032 (88 aa).

This sequence belongs to the UPF0297 family.

This chain is UPF0297 protein BLi02868/BL02032, found in Bacillus licheniformis (strain ATCC 14580 / DSM 13 / JCM 2505 / CCUG 7422 / NBRC 12200 / NCIMB 9375 / NCTC 10341 / NRRL NRS-1264 / Gibson 46).